The primary structure comprises 470 residues: Light-independent protochlorophyllide reductase subunit N (470 aa).

Cysteine 24, cysteine 49, and cysteine 109 together coordinate [4Fe-4S] cluster.

The protein belongs to the BchN/ChlN family. In terms of assembly, protochlorophyllide reductase is composed of three subunits; ChlL, ChlN and ChlB. Forms a heterotetramer of two ChlB and two ChlN subunits. [4Fe-4S] cluster serves as cofactor.

The enzyme catalyses chlorophyllide a + oxidized 2[4Fe-4S]-[ferredoxin] + 2 ADP + 2 phosphate = protochlorophyllide a + reduced 2[4Fe-4S]-[ferredoxin] + 2 ATP + 2 H2O. It functions in the pathway porphyrin-containing compound metabolism; chlorophyll biosynthesis (light-independent). Its function is as follows. Component of the dark-operative protochlorophyllide reductase (DPOR) that uses Mg-ATP and reduced ferredoxin to reduce ring D of protochlorophyllide (Pchlide) to form chlorophyllide a (Chlide). This reaction is light-independent. The NB-protein (ChlN-ChlB) is the catalytic component of the complex. This chain is Light-independent protochlorophyllide reductase subunit N, found in Acaryochloris marina (strain MBIC 11017).